We begin with the raw amino-acid sequence, 99 residues long: NAD(P)H-quinone oxidoreductase subunit 4L, chloroplastic (99 aa).

The next 3 membrane-spanning stretches (helical) occupy residues 1-21, 31-51, and 59-79; these read MFEQ…FGLI, MSLE…SNLF, and IFTL…LAIA.

The protein belongs to the complex I subunit 4L family. NDH is composed of at least 16 different subunits, 5 of which are encoded in the nucleus.

The protein resides in the plastid. It is found in the chloroplast thylakoid membrane. It catalyses the reaction a plastoquinone + NADH + (n+1) H(+)(in) = a plastoquinol + NAD(+) + n H(+)(out). It carries out the reaction a plastoquinone + NADPH + (n+1) H(+)(in) = a plastoquinol + NADP(+) + n H(+)(out). NDH shuttles electrons from NAD(P)H:plastoquinone, via FMN and iron-sulfur (Fe-S) centers, to quinones in the photosynthetic chain and possibly in a chloroplast respiratory chain. The immediate electron acceptor for the enzyme in this species is believed to be plastoquinone. Couples the redox reaction to proton translocation, and thus conserves the redox energy in a proton gradient. The polypeptide is NAD(P)H-quinone oxidoreductase subunit 4L, chloroplastic (Adiantum capillus-veneris (Maidenhair fern)).